We begin with the raw amino-acid sequence, 61 residues long: Fasciculin-2 (61 aa).

Disulfide bonds link C3–C22, C17–C39, C41–C52, and C53–C59.

The protein belongs to the three-finger toxin family. Short-chain subfamily. Acn-esterase inhibitor sub-subfamily. In terms of tissue distribution, expressed by the venom gland.

It is found in the secreted. Functionally, interferes with neuromuscular transmission by inhibiting the enzyme acetylcholinesterase (AChE) present at the neuromuscular junction. It selectively binds and inhibits with a 1:1 stoichiometry the mammalian and electric fish AChE at picomolar concentrations. It is highly specific for the peripheral site of AChE and blocks the entry of acetylcholine into the active site of the enzyme (through the Met-33 residue), thereby preventing its breakdown. It has been called fasciculin since after injection into mice it causes severe, generalized and long-lasting (5-7 hours) fasciculations. The protein is Fasciculin-2 of Dendroaspis angusticeps (Eastern green mamba).